A 373-amino-acid chain; its full sequence is MKTAHTIVVFGGDYCGPEVMKEGLKVLSEIERQNPDVKLELIHHLVGGAAWDVHGENITTAALSDATSASAVLLGAVGGPKWAKHAIPVEWGLGRLRKALDAFGNLRPVNFAAPSLISRSSLKPKVCTGTEILIVRELTGGVYFGPRSEHDGSFDQASDTDVYTRKEIERVTRLAGSLAMARDPPLAVTSLDKANVLAACGRLWRGVVSEVMAAEFPEIELRHMLIDSAAMVMALNPTKLNGVVLASNMFGDIISDQASAIPGSIGLLPSASLCSIPERGQESSRIRGLYEPIHGSAPDIAGKGIVNPIGMILSVAMMCRLSLDMGAAATSIEAAVRDTLEVGICTPDIGGTASTSEVGDAVVAALVRIFDKH.

Residue 77-79 coordinates NADP(+); that stretch reads VGG. Residues arginine 97 and arginine 136 each coordinate substrate. Aspartate 227, aspartate 252, and aspartate 256 together coordinate Mg(2+). 284–289 provides a ligand contact to NADP(+); the sequence is SRIRGL.

This sequence belongs to the isocitrate and isopropylmalate dehydrogenases family. Homodimer. Mg(2+) is required as a cofactor. Mn(2+) serves as cofactor.

It catalyses the reaction (2R,3S)-3-isopropylmalate + NAD(+) = 4-methyl-2-oxopentanoate + CO2 + NADH. Its pathway is amino-acid biosynthesis; L-leucine biosynthesis; L-leucine from 3-methyl-2-oxobutanoate: step 3/4. The protein operates within mycotoxin biosynthesis. Functionally, 3-isopropylmalate dehydrogenase; part of the gene clusters that mediate the biosynthesis of AM-toxins, host-selective toxins (HSTs) causing Alternaria blotch on apple, a worldwide distributed disease. AM-toxins are cyclic depsipeptides containing the 3 residues 2-hydroxy-isovaleric acid (2-HIV), dehydroalanine, L-alanine which are common for all 3 AM-toxins I to III. The fourth precursor is L-alpha-amino-methoxyphenyl-valeric acid (L-Amv) for AM-toxin I, L-alpha-amino-phenyl-valeric acid (L-Apv) for AM-toxin II, and L-alpha-amino-hydroxyphenyl-valeric acid (L-Ahv) for AM-toxin III. AM-toxins have two target sites for affecting susceptible apple cells; they cause invagination of the plasma membrane and electrolyte loss and chloroplast disorganization. The non-ribosomal peptide synthetase AMT1 contains 4 catalytic modules and is responsible for activation of each residue in AM-toxin. The aldo-keto reductase AMT2 catalyzes the conversion of 2-keto-isovaleric acid (2-KIV) to 2-hydroxy-isovaleric acid (2-HIV), one of the precursor residues incorporated by AMT1 during AM-toxin biosynthesis, by reduction of its ketone to an alcohol. The cytochrome P450 monooxygenase AMT3 and the thioesterase AMT4 are also important for AM-toxin production, but their exact function within the AM-toxin biosynthesis are not known yet. Up to 21 proteins (including AMT1 to AMT4) are predicted to be involved in AM-toxin biosynthesis since their expression ishighly up-regulated in AM-toxin-producing cultures. The sequence is that of 3-isopropylmalate dehydrogenase AMT6 from Alternaria alternata (Alternaria rot fungus).